The chain runs to 214 residues: Adenylate kinase (214 aa).

10–15 contacts ATP; the sequence is GSGKGT. The NMP stretch occupies residues 30–59; it reads STGDMLRAAVREGTPLGMEAKKIMDAGQLV. AMP-binding positions include Thr31, Arg36, 57-59, 85-88, and Gln92; these read QLV and GFPR. The interval 122–159 is LID; it reads GRRVHPASGRTYHVVFNPPKVEGRDDETGEPLVQREDD. Residues Arg123 and 132-133 each bind ATP; that span reads TY. 2 residues coordinate AMP: Arg156 and Arg167. Residue Gly200 coordinates ATP.

This sequence belongs to the adenylate kinase family. Monomer.

The protein resides in the cytoplasm. It catalyses the reaction AMP + ATP = 2 ADP. Its pathway is purine metabolism; AMP biosynthesis via salvage pathway; AMP from ADP: step 1/1. Functionally, catalyzes the reversible transfer of the terminal phosphate group between ATP and AMP. Plays an important role in cellular energy homeostasis and in adenine nucleotide metabolism. This is Adenylate kinase from Methylococcus capsulatus (strain ATCC 33009 / NCIMB 11132 / Bath).